A 242-amino-acid chain; its full sequence is UDP-2,3-diacylglucosamine hydrolase (242 aa).

5 residues coordinate Mn(2+): aspartate 9, histidine 11, aspartate 42, asparagine 79, and histidine 114. A substrate-binding site is contributed by 79–80; sequence NR. 5 residues coordinate substrate: aspartate 122, serine 160, asparagine 164, lysine 167, and histidine 195. Mn(2+) is bound by residues histidine 195 and histidine 197.

This sequence belongs to the LpxH family. Mn(2+) serves as cofactor.

Its subcellular location is the cell inner membrane. It carries out the reaction UDP-2-N,3-O-bis[(3R)-3-hydroxytetradecanoyl]-alpha-D-glucosamine + H2O = 2-N,3-O-bis[(3R)-3-hydroxytetradecanoyl]-alpha-D-glucosaminyl 1-phosphate + UMP + 2 H(+). It participates in glycolipid biosynthesis; lipid IV(A) biosynthesis; lipid IV(A) from (3R)-3-hydroxytetradecanoyl-[acyl-carrier-protein] and UDP-N-acetyl-alpha-D-glucosamine: step 4/6. In terms of biological role, hydrolyzes the pyrophosphate bond of UDP-2,3-diacylglucosamine to yield 2,3-diacylglucosamine 1-phosphate (lipid X) and UMP by catalyzing the attack of water at the alpha-P atom. Involved in the biosynthesis of lipid A, a phosphorylated glycolipid that anchors the lipopolysaccharide to the outer membrane of the cell. The chain is UDP-2,3-diacylglucosamine hydrolase from Shewanella loihica (strain ATCC BAA-1088 / PV-4).